A 205-amino-acid polypeptide reads, in one-letter code: Ribosomal RNA small subunit methyltransferase G (205 aa).

S-adenosyl-L-methionine contacts are provided by residues Gly76, Leu81, 127–128, and Arg140; that span reads IE.

Belongs to the methyltransferase superfamily. RNA methyltransferase RsmG family.

It is found in the cytoplasm. The catalysed reaction is guanosine(527) in 16S rRNA + S-adenosyl-L-methionine = N(7)-methylguanosine(527) in 16S rRNA + S-adenosyl-L-homocysteine. Functionally, specifically methylates the N7 position of guanine in position 527 of 16S rRNA. This is Ribosomal RNA small subunit methyltransferase G from Francisella tularensis subsp. tularensis (strain FSC 198).